Consider the following 327-residue polypeptide: MTNNISHNQKATEKVEAQNNNNITRKRRGAISSEPLGDKPATPLPNIPKTVETQQRLEQALSNNIMFSHLEEEERNVVFLAMVEVLYKAGDIIIKQGDEGDLFYVIDSGICDIYVCQNGGSPTLVMEVFEGGSFGELALIYGSPRAATVIARTDVRLWALNGATYRRILMDQTIKKRKLYEEFLEKVSILRHIDKYERVSLADALEPVNFQDGEVIVRQGDPGDRFYIIVEGKVVVTQETVPGDHSTSHVVSELHPSDYFGEIALLTDRPRAATVTSIGYTKCVELDRQRFNRLCGPIDQMLRRNMETYNQFLNRPPSSPNLTSQKS.

The interval 1–47 is disordered; the sequence is MTNNISHNQKATEKVEAQNNNNITRKRRGAISSEPLGDKPATPLPNI. Residues 1–65 form a dimerization and phosphorylation region; sequence MTNNISHNQK…RLEQALSNNI (65 aa). The short motif at 27–31 is the Pseudophosphorylation motif element; the sequence is RRGAI. S32 is modified (phosphoserine). 3',5'-cyclic AMP-binding positions include 66 to 188, E136, R145, 189 to 327, E262, and R271; these read MFSH…EKVS and ILRH…SQKS.

This sequence belongs to the cAMP-dependent kinase regulatory chain family. In Dictyostelium the holoenzyme is a dimer composed of a regulatory (R) and a catalytic (C) subunit. In the presence of cAMP it dissociates into the active C subunit and an R monomer. In other eukaryotes the holoenzyme is a tetramer composed of 2 regulatory (R) and 2 catalytic (C) subunits. In the presence of cAMP it dissociates into active monomeric C subunits and an R dimer. In terms of processing, the pseudophosphorylation site binds to the substrate-binding region of the catalytic chain but is not phosphorylated. The physiological significance of phosphorylations by other kinases is unclear.

This is cAMP-dependent protein kinase regulatory subunit (pkaR) from Dictyostelium discoideum (Social amoeba).